A 134-amino-acid polypeptide reads, in one-letter code: Cilia- and flagella-associated protein 144 (134 aa).

Residues 76–95 (QGPRKKYPETQTENQEVGWD) are disordered.

Belongs to the CFAP144 family. As to quaternary structure, microtubule inner protein component of sperm flagellar doublet microtubules.

The protein localises to the cytoplasm. The protein resides in the cytoskeleton. It is found in the cilium axoneme. It localises to the flagellum axoneme. Its function is as follows. Microtubule inner protein (MIP) part of the dynein-decorated doublet microtubules (DMTs) in cilia axoneme, which is required for motile cilia beating. The polypeptide is Cilia- and flagella-associated protein 144 (Homo sapiens (Human)).